The following is a 510-amino-acid chain: Zinc finger and SCAN domain-containing protein 18 (510 aa).

The tract at residues 1 to 40 (MLPLEKAFASPRSSPAPPDLPTPGSAAGVQQEEPETIPER) is disordered. One can recognise an SCAN box domain in the interval 49 to 131 (RLRFREFVYQ…SLVEGLADVL (83 aa)). Disordered regions lie at residues 172 to 191 (ALGA…SPDP), 201 to 231 (EAKT…EWGH), 263 to 413 (TEEL…GKPY), and 461 to 510 (KTHE…EAQR). 2 stretches are compositionally biased toward basic and acidic residues: residues 214 to 231 (QKLK…EWGH) and 263 to 273 (TEELRLVERDP). A compositionally biased stretch (low complexity) spans 288–299 (AGCACEEAAPAG). The span at 344-356 (DSATGSQRQSVIQ) shows a compositional bias: polar residues. 2 C2H2-type zinc fingers span residues 413–435 (YACG…HSSH) and 441–463 (YACQ…QKTH). Residues 491-501 (GGPPESVEGEA) are compositionally biased toward low complexity.

It belongs to the krueppel C2H2-type zinc-finger protein family.

The protein localises to the nucleus. Its function is as follows. May be involved in transcriptional regulation. The sequence is that of Zinc finger and SCAN domain-containing protein 18 (ZSCAN18) from Homo sapiens (Human).